Consider the following 517-residue polypeptide: GMP synthase [glutamine-hydrolyzing] (517 aa).

One can recognise a Glutamine amidotransferase type-1 domain in the interval 9–199 (RILILDFGSQ…VLGVCGCERL (191 aa)). Cysteine 86 (nucleophile) is an active-site residue. Residues histidine 173 and glutamate 175 contribute to the active site. The GMPS ATP-PPase domain occupies 200–392 (WTSESIIEDA…LGLPYNMLYR (193 aa)). 227 to 233 (SGGVDSS) is an ATP binding site.

As to quaternary structure, homodimer.

It carries out the reaction XMP + L-glutamine + ATP + H2O = GMP + L-glutamate + AMP + diphosphate + 2 H(+). It participates in purine metabolism; GMP biosynthesis; GMP from XMP (L-Gln route): step 1/1. Catalyzes the synthesis of GMP from XMP. This is GMP synthase [glutamine-hydrolyzing] from Vibrio parahaemolyticus serotype O3:K6 (strain RIMD 2210633).